A 303-amino-acid polypeptide reads, in one-letter code: Pyridoxal 5'-phosphate synthase subunit PdxS (303 aa).

Aspartate 33 is a D-ribose 5-phosphate binding site. Lysine 90 functions as the Schiff-base intermediate with D-ribose 5-phosphate in the catalytic mechanism. Glycine 162 contacts D-ribose 5-phosphate. Arginine 174 lines the D-glyceraldehyde 3-phosphate pocket. D-ribose 5-phosphate is bound by residues glycine 223 and 244–245; that span reads GS.

The protein belongs to the PdxS/SNZ family. As to quaternary structure, in the presence of PdxT, forms a dodecamer of heterodimers.

It carries out the reaction aldehydo-D-ribose 5-phosphate + D-glyceraldehyde 3-phosphate + L-glutamine = pyridoxal 5'-phosphate + L-glutamate + phosphate + 3 H2O + H(+). Its pathway is cofactor biosynthesis; pyridoxal 5'-phosphate biosynthesis. Catalyzes the formation of pyridoxal 5'-phosphate from ribose 5-phosphate (RBP), glyceraldehyde 3-phosphate (G3P) and ammonia. The ammonia is provided by the PdxT subunit. Can also use ribulose 5-phosphate and dihydroxyacetone phosphate as substrates, resulting from enzyme-catalyzed isomerization of RBP and G3P, respectively. The sequence is that of Pyridoxal 5'-phosphate synthase subunit PdxS from Mycolicibacterium smegmatis (strain ATCC 700084 / mc(2)155) (Mycobacterium smegmatis).